We begin with the raw amino-acid sequence, 261 residues long: 4-phosphopantoate--beta-alanine ligase (261 aa).

ATP is bound by residues Arg17, Arg39, 181–183 (DLN), 187–188 (RS), and 199–200 (NI).

The protein belongs to the archaeal phosphopantothenate synthetase family. Homodimer.

The enzyme catalyses (R)-4-phosphopantoate + beta-alanine + ATP = (R)-4'-phosphopantothenate + AMP + diphosphate + H(+). Its pathway is cofactor biosynthesis; coenzyme A biosynthesis. Activity is not affected by 4'-phosphopantothenate or CoA/acetyl-CoA. In terms of biological role, catalyzes the condensation of (R)-4-phosphopantoate and beta-alanine to 4'-phosphopantothenate in the CoA biosynthesis pathway. Cannot use (R)-pantoate as substrate and thus does not display pantothenate synthetase (PS) activity. Displays strict specificity for its natural substrates, 4-phosphopantoate, ATP and beta-alanine. This chain is 4-phosphopantoate--beta-alanine ligase, found in Thermococcus kodakarensis (strain ATCC BAA-918 / JCM 12380 / KOD1) (Pyrococcus kodakaraensis (strain KOD1)).